The following is a 72-amino-acid chain: Translational regulator CsrA (72 aa).

The protein belongs to the CsrA/RsmA family. As to quaternary structure, homodimer; the beta-strands of each monomer intercalate to form a hydrophobic core, while the alpha-helices form wings that extend away from the core.

The protein resides in the cytoplasm. In terms of biological role, a translational regulator that binds mRNA to regulate translation initiation and/or mRNA stability. Usually binds in the 5'-UTR at or near the Shine-Dalgarno sequence preventing ribosome-binding, thus repressing translation. Its main target seems to be the major flagellin gene, while its function is anatagonized by FliW. The sequence is that of Translational regulator CsrA from Clostridium botulinum (strain 657 / Type Ba4).